We begin with the raw amino-acid sequence, 725 residues long: MIYQGENLSVDYIEPGIAHLVFNAKGSVNKLNLATLQSVGEAIDALYSQKDLQGLLLSSDKSAFIVGADITEFLGLFDIPTEELSDWLHQANAIFNRLEDIPVPTLSAITGFALGGGCECVLATDFRLADETASIGLPETQLGIMPGWGGSVRLPRLIGADPAMEVITTGKPKRAKDALALGMIDGVVSRETLITDSVTMLKKAIGGQLDWQSRRTQKKAPLKLSPLEAAMSFNVAKGMIMKMAGKHYPAPMTAVKSIENSAFMDRDAALEVENKNFVALTQTDVAKSLVGIFLNDQLVKSKAKQAIKNSEPVTSAAVLGAGIMGGGIAYQSASKGVPVLMKDIAQQSLDLGMNEASKLLNKQLERGRLSGLKMAQVLSSITPSLNYASIENKDIVVEAVVENPKIKAAVLAEVENEVNEHAILASNTSTIPISLLAKSLKRPENFCGMHFFNPVHRMPLVEVIRGEKTSQQTIDRVVAYASQMGKTPIVVNDCPGFFVNRVLFPYFAGFSLLLRDGGDYQQIDKVMEKEFGWPMGPAYLLDVVGIDTAHHAQAVMAQGFPERMAKNGRDVIDAMFESDRYGQKNGSGFYAYSIDRKGKPKKNIDESTAGIIATVTNTTQPYTSEQISARMMIPMINEVIRCLDEGIIASPAEADMALVYGLGFPPFKGGVFRYLDAIGLTTYLDMAKEFEHLGAVYQVPESIKQKAADGECYYPAPQSLSAPSA.

The interval 1–189 is enoyl-CoA hydratase/isomerase; that stretch reads MIYQGENLSV…ALGMIDGVVS (189 aa). Residue D296 coordinates substrate. The interval 311–725 is 3-hydroxyacyl-CoA dehydrogenase; that stretch reads EPVTSAAVLG…APQSLSAPSA (415 aa). NAD(+)-binding positions include M324, D343, 400–402, K407, and S429; that span reads VVE. The active-site For 3-hydroxyacyl-CoA dehydrogenase activity is H450. N453 provides a ligand contact to NAD(+). The substrate site is built by N500 and Y660.

The protein in the N-terminal section; belongs to the enoyl-CoA hydratase/isomerase family. It in the C-terminal section; belongs to the 3-hydroxyacyl-CoA dehydrogenase family. Heterotetramer of two alpha chains (FadB) and two beta chains (FadA).

It catalyses the reaction a (3S)-3-hydroxyacyl-CoA + NAD(+) = a 3-oxoacyl-CoA + NADH + H(+). The catalysed reaction is a (3S)-3-hydroxyacyl-CoA = a (2E)-enoyl-CoA + H2O. The enzyme catalyses a 4-saturated-(3S)-3-hydroxyacyl-CoA = a (3E)-enoyl-CoA + H2O. It carries out the reaction (3S)-3-hydroxybutanoyl-CoA = (3R)-3-hydroxybutanoyl-CoA. It catalyses the reaction a (3Z)-enoyl-CoA = a 4-saturated (2E)-enoyl-CoA. The catalysed reaction is a (3E)-enoyl-CoA = a 4-saturated (2E)-enoyl-CoA. The protein operates within lipid metabolism; fatty acid beta-oxidation. Involved in the aerobic and anaerobic degradation of long-chain fatty acids via beta-oxidation cycle. Catalyzes the formation of 3-oxoacyl-CoA from enoyl-CoA via L-3-hydroxyacyl-CoA. It can also use D-3-hydroxyacyl-CoA and cis-3-enoyl-CoA as substrate. The polypeptide is Fatty acid oxidation complex subunit alpha (Aliivibrio fischeri (strain MJ11) (Vibrio fischeri)).